The sequence spans 236 residues: uncharacterized protein (236 aa).

Basic residues predominate over residues 1-12 (MKLLGHRKSHGH). Positions 1–108 (MKLLGHRKSH…KAANRARMTE (108 aa)) are disordered. Basic and acidic residues predominate over residues 13–31 (QRADASPDAGSKDGCRPDS). Residues 32 to 47 (GRTSGSDTSRGSQTTG) are compositionally biased toward low complexity. Basic residues predominate over residues 52–65 (PTPKRNQSRRHTKK). Positions 67 to 78 (PVAPAPMTAAQA) are enriched in low complexity. Residues 90 to 108 (LSREERRAEKAANRARMTE) are compositionally biased toward basic and acidic residues. Transmembrane regions (helical) follow at residues 142–162 (NLLG…FAVP) and 166–186 (FYLS…AIIL).

It localises to the cell membrane. This is an uncharacterized protein from Mycobacterium tuberculosis (strain CDC 1551 / Oshkosh).